The sequence spans 155 residues: Small ribosomal subunit protein uS7c (155 aa).

It belongs to the universal ribosomal protein uS7 family. Part of the 30S ribosomal subunit.

It localises to the plastid. The protein localises to the chloroplast. In terms of biological role, one of the primary rRNA binding proteins, it binds directly to 16S rRNA where it nucleates assembly of the head domain of the 30S subunit. The chain is Small ribosomal subunit protein uS7c (rps7) from Silene latifolia (White campion).